A 310-amino-acid polypeptide reads, in one-letter code: Homoserine kinase (310 aa).

An ATP-binding site is contributed by 91–101; the sequence is PIGSGLGSSAC.

This sequence belongs to the GHMP kinase family. Homoserine kinase subfamily.

It is found in the cytoplasm. It carries out the reaction L-homoserine + ATP = O-phospho-L-homoserine + ADP + H(+). It functions in the pathway amino-acid biosynthesis; L-threonine biosynthesis; L-threonine from L-aspartate: step 4/5. Functionally, catalyzes the ATP-dependent phosphorylation of L-homoserine to L-homoserine phosphate. The sequence is that of Homoserine kinase from Escherichia coli O157:H7.